Here is a 405-residue protein sequence, read N- to C-terminus: Replication factor C large subunit (405 aa).

47–54 (GPPGVGKT) provides a ligand contact to ATP.

This sequence belongs to the activator 1 small subunits family. RfcL subfamily. Heteropentamer composed of four small subunits (RfcS) and one large subunit (RfcL). Probably interacts with PCNA subunit PCNA3.

In terms of biological role, part of the RFC clamp loader complex which loads the PCNA sliding clamp onto DNA. The complex possesses DNA-dependent ATPase activity. This is Replication factor C large subunit (rfcL) from Saccharolobus solfataricus (strain ATCC 35092 / DSM 1617 / JCM 11322 / P2) (Sulfolobus solfataricus).